An 83-amino-acid polypeptide reads, in one-letter code: Small ribosomal subunit protein bS16 (83 aa).

The protein belongs to the bacterial ribosomal protein bS16 family.

The chain is Small ribosomal subunit protein bS16 from Magnetococcus marinus (strain ATCC BAA-1437 / JCM 17883 / MC-1).